A 73-amino-acid chain; its full sequence is MKKDLHPEYHVINVKMTNGDVVEMRSIWGAEGDTLALDIDPTVHPAWTGGGARLLDTGGRVSKFKKKYEGLGF.

It belongs to the bacterial ribosomal protein bL31 family. Type A subfamily. Part of the 50S ribosomal subunit.

Its function is as follows. Binds the 23S rRNA. The polypeptide is Large ribosomal subunit protein bL31 (rpmE) (Jannaschia sp. (strain CCS1)).